The sequence spans 339 residues: Proto-oncogene serine/threonine-protein kinase mos (339 aa).

Residues valine 61–arginine 335 form the Protein kinase domain. ATP is bound by residues leucine 67 to valine 75 and lysine 88. Aspartate 196 functions as the Proton acceptor in the catalytic mechanism.

It belongs to the protein kinase superfamily. Ser/Thr protein kinase family. As to quaternary structure, interacts with MAP2K1/MEK1. As to expression, expressed mainly in gonadal tissues, and cardiac and skeletal muscles.

It is found in the cytoplasm. It carries out the reaction L-seryl-[protein] + ATP = O-phospho-L-seryl-[protein] + ADP + H(+). It catalyses the reaction L-threonyl-[protein] + ATP = O-phospho-L-threonyl-[protein] + ADP + H(+). Serine/threonine kinase involved in the regulation of MAPK signaling. Is an activator of the ERK1/2 signaling cascade playing an essential role in the stimulation of oocyte maturation. This Rattus norvegicus (Rat) protein is Proto-oncogene serine/threonine-protein kinase mos.